The sequence spans 428 residues: Neuromedin-U receptor 1 (428 aa).

The Extracellular segment spans residues 1–59; the sequence is MTPPCLNCSIFPGALSPNASRSPLVCNISEFKWPYQPEDLNLTDEALRLKYLGPQQMKQ. N-linked (GlcNAc...) asparagine glycosylation is found at Asn-27 and Asn-41. Residues 60–80 traverse the membrane as a helical segment; sequence FVPICVTYLLIFVVGTLGNGL. Over 81-96 the chain is Cytoplasmic; that stretch reads TCTVILRNKTMRTPTN. A helical transmembrane segment spans residues 97 to 117; it reads FYLFSLAVSDMLVLLVGLPLE. Residues 118 to 137 are Extracellular-facing; sequence LYEMQQNYPFQLGASACYFR. A disulfide bridge connects residues Cys-134 and Cys-219. Residues 138–158 traverse the membrane as a helical segment; the sequence is ILLLETVCLASVLNVTALSVE. Residues 159 to 181 lie on the Cytoplasmic side of the membrane; sequence RYVAVVRPLQAKSVMTRAHVRRM. Residues 182 to 202 form a helical membrane-spanning segment; sequence VGAIWVLATLFSLPNTSLHGL. Topologically, residues 203-235 are extracellular; the sequence is SQLTVPCRGPVPDSAICSLVGPMDFYKLVVLTT. The chain crosses the membrane as a helical span at residues 236 to 256; sequence ALLFFCLPMVTISVLYLLIGL. At 257–294 the chain is on the cytoplasmic side; the sequence is RLRRERMLLQVEVKGRKTAATQETSHRRIQLQDRGRRQ. Residues 295-315 form a helical membrane-spanning segment; it reads VTKMLFALVVVFGICWAPFHA. Residues 316-339 are Extracellular-facing; that stretch reads DRIMWSLVYGHSTEGLHLAYQCVH. Residues 340–360 form a helical membrane-spanning segment; sequence IASGIFFYLGSAANPVLYSLM. Residues 361–428 are Cytoplasmic-facing; it reads STRFRETFLQ…PGCQQETDPS (68 aa).

Belongs to the G-protein coupled receptor 1 family. As to expression, ubiquitously expressed.

The protein resides in the cell membrane. Its function is as follows. Receptor for the neuromedin-U and neuromedin-S neuropeptides. The protein is Neuromedin-U receptor 1 (Nmur1) of Mus musculus (Mouse).